A 123-amino-acid chain; its full sequence is Large ribosomal subunit protein bL12 (123 aa).

The protein belongs to the bacterial ribosomal protein bL12 family. Homodimer. Part of the ribosomal stalk of the 50S ribosomal subunit. Forms a multimeric L10(L12)X complex, where L10 forms an elongated spine to which 2 to 4 L12 dimers bind in a sequential fashion. Binds GTP-bound translation factors.

Forms part of the ribosomal stalk which helps the ribosome interact with GTP-bound translation factors. Is thus essential for accurate translation. This Rhodospirillum rubrum (strain ATCC 11170 / ATH 1.1.1 / DSM 467 / LMG 4362 / NCIMB 8255 / S1) protein is Large ribosomal subunit protein bL12.